The chain runs to 331 residues: 3-dehydroquinate synthase homolog (331 aa).

It belongs to the archaeal-type DHQ synthase family.

The polypeptide is 3-dehydroquinate synthase homolog (Aquifex aeolicus (strain VF5)).